Here is a 436-residue protein sequence, read N- to C-terminus: Trigger factor (436 aa).

In terms of domain architecture, PPIase FKBP-type spans 161 to 246; it reads EDQLNIDFVG…VNSVSEPKLP (86 aa).

This sequence belongs to the FKBP-type PPIase family. Tig subfamily.

Its subcellular location is the cytoplasm. It carries out the reaction [protein]-peptidylproline (omega=180) = [protein]-peptidylproline (omega=0). Functionally, involved in protein export. Acts as a chaperone by maintaining the newly synthesized protein in an open conformation. Functions as a peptidyl-prolyl cis-trans isomerase. The chain is Trigger factor from Pseudomonas fluorescens (strain SBW25).